The primary structure comprises 471 residues: ATP synthase subunit beta (471 aa).

157-164 (GGAGVGKT) lines the ATP pocket.

The protein belongs to the ATPase alpha/beta chains family. As to quaternary structure, F-type ATPases have 2 components, CF(1) - the catalytic core - and CF(0) - the membrane proton channel. CF(1) has five subunits: alpha(3), beta(3), gamma(1), delta(1), epsilon(1). CF(0) has three main subunits: a(1), b(2) and c(9-12). The alpha and beta chains form an alternating ring which encloses part of the gamma chain. CF(1) is attached to CF(0) by a central stalk formed by the gamma and epsilon chains, while a peripheral stalk is formed by the delta and b chains.

It is found in the cell inner membrane. It carries out the reaction ATP + H2O + 4 H(+)(in) = ADP + phosphate + 5 H(+)(out). In terms of biological role, produces ATP from ADP in the presence of a proton gradient across the membrane. The catalytic sites are hosted primarily by the beta subunits. This Trichlorobacter lovleyi (strain ATCC BAA-1151 / DSM 17278 / SZ) (Geobacter lovleyi) protein is ATP synthase subunit beta.